A 153-amino-acid polypeptide reads, in one-letter code: MESWLFLLGILAIAIVGKNKSLIIGVSAVMVFKLIPQTQNFLKLLQTQGINWGVTVISAAIMVPIATGEIGFKELLNVIKSPAGWIAIGCGVLVAVLSAKGVGLLAMSPEMTVALVFGTIIGVVFLKGIAAGPVIASGLTYVILTVFNLVPGH.

The next 4 helical transmembrane spans lie at 4–24 (WLFLLGILAIAIVGKNKSLII), 52–72 (WGVTVISAAIMVPIATGEIGF), 85–105 (WIAIGCGVLVAVLSAKGVGLL), and 115–135 (LVFGTIIGVVFLKGIAAGPVI).

It belongs to the UPF0756 family.

The protein localises to the cell membrane. The chain is UPF0756 membrane protein LCABL_15860 from Lacticaseibacillus casei (strain BL23) (Lactobacillus casei).